Reading from the N-terminus, the 1078-residue chain is Zinc finger protein 827 (1078 aa).

Basic and acidic residues predominate over residues 1 to 10; it reads MPRRKQEQPK. The tract at residues 1–14 is mediates direct interaction with RBBP4; it reads MPRRKQEQPKRLPS. The interval 1-76 is disordered; that stretch reads MPRRKQEQPK…PDTSLGSATP (76 aa). The short motif at 3–5 is the RRK motif; mediates NuRD recruitment to telomeres element; sequence RRK. 2 stretches are compositionally biased toward polar residues: residues 33-42 and 62-76; these read YGNSSETPSE and EQST…SATP. Glycyl lysine isopeptide (Lys-Gly) (interchain with G-Cter in SUMO2) cross-links involve residues K175, K215, and K225. A disordered region spans residues 307-341; sequence SLLPDDPLPLPSSEKKPEKVTPPPPPPPPTAQPPQ. Positions 326 to 338 are enriched in pro residues; it reads VTPPPPPPPPTAQ. Residues K357 and K369 each participate in a glycyl lysine isopeptide (Lys-Gly) (interchain with G-Cter in SUMO2) cross-link. 3 consecutive C2H2-type zinc fingers follow at residues 371–393, 399–421, and 430–452; these read FQCP…MVIH, HQCP…MKVH, and FQCQ…MRCH. Residues K463, K472, K520, K546, K577, K584, and K594 each participate in a glycyl lysine isopeptide (Lys-Gly) (interchain with G-Cter in SUMO2) cross-link. Residues 466-490 form a disordered region; that stretch reads IPDPDVKGSPHLSDSGCLGQQREGG. Residues 594-640 are disordered; it reads KEEPKEEESLSMPLPRSSYVFSPEPEVSTPSVSEDPLTPQEGKGSVL. A compositionally biased stretch (low complexity) spans 613-627; the sequence is VFSPEPEVSTPSVSE. Residues K636 and K655 each participate in a glycyl lysine isopeptide (Lys-Gly) (interchain with G-Cter in SUMO2) cross-link. Residue K670 forms a Glycyl lysine isopeptide (Lys-Gly) (interchain with G-Cter in SUMO1); alternate linkage. Residue K670 forms a Glycyl lysine isopeptide (Lys-Gly) (interchain with G-Cter in SUMO2); alternate linkage. Glycyl lysine isopeptide (Lys-Gly) (interchain with G-Cter in SUMO2) cross-links involve residues K701, K707, K739, K775, and K795. 2 consecutive C2H2-type zinc fingers follow at residues 814–836 and 842–864; these read FPCD…LSLH and YKCH…LTVH. Residues K867 and K888 each participate in a glycyl lysine isopeptide (Lys-Gly) (interchain with G-Cter in SUMO2) cross-link. C2H2-type zinc fingers lie at residues 894 to 916 and 926 to 949; these read YSCH…MSLH and ICCT…GTKH. Residues 945–957 show a composition bias toward basic and acidic residues; sequence IGTKHTGDDRKTP. The segment at 945 to 990 is disordered; the sequence is IGTKHTGDDRKTPSESNSPSSSSLSTLSDSANGKDDSDSSQKNKGG. A Glycyl lysine isopeptide (Lys-Gly) (interchain with G-Cter in SUMO2) cross-link involves residue K955. Positions 958–974 are enriched in low complexity; sequence SESNSPSSSSLSTLSDS. Basic and acidic residues predominate over residues 976-985; it reads NGKDDSDSSQ. A Glycyl lysine isopeptide (Lys-Gly) (interchain with G-Cter in SUMO2) cross-link involves residue K1011. 2 consecutive C2H2-type zinc fingers follow at residues 1016-1038 and 1044-1066; these read FECV…LQIH and FECD…KKCH.

Belongs to the krueppel C2H2-type zinc-finger protein family. As to quaternary structure, part of a transcription inhibitory ribonucleoprotein complex composed at least of the circular RNA circZNF827, HNRNPK and HNRNPL. Interacts with the nucleosome remodeling and histone deacetylase/NuRD complex. Interacts with RBBP4; the interaction is direct and recruits RBBP4, a component of the NuRD complex, to telomeres.

It is found in the nucleus. The protein localises to the chromosome. Its subcellular location is the telomere. Its function is as follows. As part of a ribonucleoprotein complex composed at least of HNRNPK, HNRNPL and the circular RNA circZNF827 that nucleates the complex on chromatin, may negatively regulate the transcription of genes involved in neuronal differentiation. Could also recruit the nucleosome remodeling and histone deacetylase/NuRD complex to telomeric regions of chromosomes to regulate chromatin remodeling as part of telomere maintenance. The polypeptide is Zinc finger protein 827 (Znf827) (Mus musculus (Mouse)).